The following is a 301-amino-acid chain: GTP cyclohydrolase FolE2 (301 aa).

It belongs to the GTP cyclohydrolase IV family.

It carries out the reaction GTP + H2O = 7,8-dihydroneopterin 3'-triphosphate + formate + H(+). The protein operates within cofactor biosynthesis; 7,8-dihydroneopterin triphosphate biosynthesis; 7,8-dihydroneopterin triphosphate from GTP: step 1/1. Converts GTP to 7,8-dihydroneopterin triphosphate. The polypeptide is GTP cyclohydrolase FolE2 (Pseudomonas syringae pv. syringae (strain B728a)).